A 622-amino-acid polypeptide reads, in one-letter code: Type 2 DNA topoisomerase 6 subunit B (622 aa).

Residues Asn-48, Asp-80, 101 to 102, 111 to 118, and Lys-435 each bind ATP; these read SR and GQQGIGIS.

The protein belongs to the TOP6B family. As to quaternary structure, homodimer. Heterotetramer of two Top6A and two Top6B chains.

The enzyme catalyses ATP-dependent breakage, passage and rejoining of double-stranded DNA.. In terms of biological role, relaxes both positive and negative superturns and exhibits a strong decatenase activity. This chain is Type 2 DNA topoisomerase 6 subunit B, found in Methanococcoides burtonii (strain DSM 6242 / NBRC 107633 / OCM 468 / ACE-M).